The primary structure comprises 211 residues: uncharacterized protein (211 aa).

A run of 6 helical transmembrane segments spans residues 21 to 38, 53 to 75, 82 to 104, 124 to 146, 159 to 178, and 188 to 210; these read WYVITLLLVVIYIYASEI, WGMDWFNEIWNALVFHFTNYAAV, TAYLILIGLNIEISMMFAIMGVA, IFYAIVLSAACVVVEIILNAANV, PLLIFLIGYLPFFLVAYWVY, and AVSFGILAIDAVLLIVFAGLMEW.

It localises to the cell membrane. This is an uncharacterized protein from Archaeoglobus fulgidus (strain ATCC 49558 / DSM 4304 / JCM 9628 / NBRC 100126 / VC-16).